Here is a 278-residue protein sequence, read N- to C-terminus: Elongation factor Ts (278 aa).

The segment at 79 to 82 is involved in Mg(2+) ion dislocation from EF-Tu; that stretch reads TDFV.

This sequence belongs to the EF-Ts family.

It is found in the cytoplasm. Functionally, associates with the EF-Tu.GDP complex and induces the exchange of GDP to GTP. It remains bound to the aminoacyl-tRNA.EF-Tu.GTP complex up to the GTP hydrolysis stage on the ribosome. This is Elongation factor Ts from Borrelia recurrentis (strain A1).